The chain runs to 295 residues: ATP synthase gamma chain (295 aa).

This sequence belongs to the ATPase gamma chain family. As to quaternary structure, F-type ATPases have 2 components, CF(1) - the catalytic core - and CF(0) - the membrane proton channel. CF(1) has five subunits: alpha(3), beta(3), gamma(1), delta(1), epsilon(1). CF(0) has three main subunits: a, b and c.

It is found in the cell inner membrane. Its function is as follows. Produces ATP from ADP in the presence of a proton gradient across the membrane. The gamma chain is believed to be important in regulating ATPase activity and the flow of protons through the CF(0) complex. This Cytophaga hutchinsonii (strain ATCC 33406 / DSM 1761 / CIP 103989 / NBRC 15051 / NCIMB 9469 / D465) protein is ATP synthase gamma chain.